The sequence spans 206 residues: Small ribosomal subunit protein uS4 (206 aa).

Residues 96–158 (GRLDNVVYRM…AKQQTRIKAA (63 aa)) form the S4 RNA-binding domain.

Belongs to the universal ribosomal protein uS4 family. As to quaternary structure, part of the 30S ribosomal subunit. Contacts protein S5. The interaction surface between S4 and S5 is involved in control of translational fidelity.

In terms of biological role, one of the primary rRNA binding proteins, it binds directly to 16S rRNA where it nucleates assembly of the body of the 30S subunit. Its function is as follows. With S5 and S12 plays an important role in translational accuracy. The protein is Small ribosomal subunit protein uS4 of Vibrio vulnificus (strain CMCP6).